Reading from the N-terminus, the 145-residue chain is Large ribosomal subunit protein uL13 (145 aa).

This sequence belongs to the universal ribosomal protein uL13 family. Part of the 50S ribosomal subunit.

In terms of biological role, this protein is one of the early assembly proteins of the 50S ribosomal subunit, although it is not seen to bind rRNA by itself. It is important during the early stages of 50S assembly. In Listeria monocytogenes serotype 4b (strain CLIP80459), this protein is Large ribosomal subunit protein uL13.